The primary structure comprises 403 residues: Imidazolonepropionase (403 aa).

2 residues coordinate Fe(3+): His-69 and His-71. His-69 and His-71 together coordinate Zn(2+). Arg-78, Tyr-141, and His-174 together coordinate 4-imidazolone-5-propanoate. Tyr-141 lines the N-formimidoyl-L-glutamate pocket. His-239 serves as a coordination point for Fe(3+). His-239 is a binding site for Zn(2+). Position 242 (Gln-242) interacts with 4-imidazolone-5-propanoate. Position 314 (Asp-314) interacts with Fe(3+). Asp-314 is a Zn(2+) binding site. Residues Asn-316 and Gly-318 each contribute to the N-formimidoyl-L-glutamate site. Residue Ser-319 coordinates 4-imidazolone-5-propanoate.

The protein belongs to the metallo-dependent hydrolases superfamily. HutI family. Requires Zn(2+) as cofactor. Fe(3+) is required as a cofactor.

The protein localises to the cytoplasm. The enzyme catalyses 4-imidazolone-5-propanoate + H2O = N-formimidoyl-L-glutamate. Its pathway is amino-acid degradation; L-histidine degradation into L-glutamate; N-formimidoyl-L-glutamate from L-histidine: step 3/3. Catalyzes the hydrolytic cleavage of the carbon-nitrogen bond in imidazolone-5-propanoate to yield N-formimidoyl-L-glutamate. It is the third step in the universal histidine degradation pathway. The protein is Imidazolonepropionase of Legionella pneumophila (strain Paris).